The chain runs to 164 residues: Putative pre-16S rRNA nuclease (164 aa).

It belongs to the YqgF nuclease family.

The protein resides in the cytoplasm. Functionally, could be a nuclease involved in processing of the 5'-end of pre-16S rRNA. This chain is Putative pre-16S rRNA nuclease, found in Caulobacter sp. (strain K31).